Here is a 796-residue protein sequence, read N- to C-terminus: Probable coatomer subunit beta' (796 aa).

6 WD repeats span residues 4-42 (LDFQ…GIWN), 46-84 (QTLV…RVYN), 88-126 (GEKV…KCFN), 131-170 (WKCV…KVWS), 172-214 (GSSV…KVWD), and 218-256 (KACV…KIWH).

It belongs to the WD repeat COPB2 family. In terms of assembly, oligomeric complex that consists of at least the alpha, beta, beta', gamma, delta, epsilon and zeta subunits.

It localises to the cytoplasm. The protein resides in the golgi apparatus membrane. It is found in the cytoplasmic vesicle. Its subcellular location is the COPI-coated vesicle membrane. The coatomer is a cytosolic protein complex that binds to dilysine motifs and reversibly associates with Golgi non-clathrin-coated vesicles, which further mediate biosynthetic protein transport from the ER, via the Golgi up to the trans Golgi network. Coatomer complex is required for budding from Golgi membranes, and is essential for the retrograde Golgi-to-ER transport of dilysine-tagged proteins. This is Probable coatomer subunit beta' (sec27) from Schizosaccharomyces pombe (strain 972 / ATCC 24843) (Fission yeast).